Consider the following 261-residue polypeptide: High-affinity zinc uptake system membrane protein ZnuB (261 aa).

7 helical membrane passes run 5–27 (FFFG…LFII), 48–70 (FAVL…FGML), 85–107 (ILGI…ISNF), 128–150 (IVIL…DLML), 172–194 (ILIF…LIAI), 215–234 (AFFS…LMSV), and 238–257 (LAIS…ISNL).

It belongs to the ABC-3 integral membrane protein family.

The protein resides in the cell membrane. In terms of biological role, involved in the high-affinity zinc uptake transport system. This Buchnera aphidicola subsp. Baizongia pistaciae (strain Bp) protein is High-affinity zinc uptake system membrane protein ZnuB (znuB).